The chain runs to 784 residues: Ribosome biogenesis protein BOP1 homolog (784 aa).

Over residues 1 to 11 (MTKKLALKRRG) the composition is skewed to basic residues. The interval 1-159 (MTKKLALKRR…DSDTSDEEDI (159 aa)) is disordered. 4 stretches are compositionally biased toward acidic residues: residues 27–36 (SENEEEEEDL), 45–54 (EDSTDDEGID), 62–73 (SEELQFESDEEG), and 84–111 (AEEDEESSDEEDNEEEGSTDEEEVEDEE). 2 stretches are compositionally biased toward basic and acidic residues: residues 112–123 (KVSKSKQSDDKP) and 138–148 (LPKRDSSKPEY). Residues 149–158 (QDSDTSDEED) are compositionally biased toward acidic residues. 7 WD repeats span residues 445–486 (GHTD…RTIE), 488–526 (DEVVRCVAWCPNPKLSIIAVATGNRLLLVNPKVGDKVLV), 570–612 (THFK…SQIP), 615–653 (KSKGLIQFVLFHPVKPCFFVATQHNIRIYDLVKQELVKK), 656–695 (TNSKWISGMSIHPKGDNLLVSTYDKKMLWFDLDLSTKPYQ), 699–738 (LHRNAVRSVAFHRRYPLFASGSDDQAVIVSHGMVYNDLLQ), and 754–784 (RDEFGVLDVNWHPVQPWVFSTGADSTIRLYT).

It belongs to the WD repeat BOP1/ERB1 family.

Its subcellular location is the nucleus. It is found in the nucleolus. The protein localises to the nucleoplasm. Functionally, required for maturation of ribosomal RNAs and formation of the large ribosomal subunit. In Drosophila sechellia (Fruit fly), this protein is Ribosome biogenesis protein BOP1 homolog.